Reading from the N-terminus, the 106-residue chain is Small ribosomal subunit protein uS10 (106 aa).

The protein belongs to the universal ribosomal protein uS10 family. Part of the 30S ribosomal subunit.

Its function is as follows. Involved in the binding of tRNA to the ribosomes. In Mesomycoplasma hyopneumoniae (strain 232) (Mycoplasma hyopneumoniae), this protein is Small ribosomal subunit protein uS10.